Reading from the N-terminus, the 378-residue chain is MTKPQPIPFGKSDLFSLGVEVELQIIHPETRNLFPISPDILEEWSLQSPHLKPEVFQSMLEIDTPICKNVQEVEYELLLTSRELLRICKKHGARLASNGTHPFAKWHHRIFYPSDRYEYLLERNQHIARRLMIYGLHVHLGMKDGDHCIAMMNEFLYYLPHMLAMSASSPFWTGHDTGLASSRITVFEAHPAGGTPCRVENWAQFEDIVQKLTRSNSIGSFKDIWWDIRPSPNYGTLEIRICDGVPGIRKTTRLVAFIHLLAKHLQKRLEQGIRRQTPDDWMVRENKWRASRHGLDCEVLIDNDGMTKNLREDIKDLLAAMKEDAAEMGYTEYLKQLVEEDLTHPSYEIQRALFEKTGSLEHVVDSLCDVFEKDLDVV.

This sequence belongs to the glutamate--cysteine ligase type 2 family. YbdK subfamily.

The catalysed reaction is L-cysteine + L-glutamate + ATP = gamma-L-glutamyl-L-cysteine + ADP + phosphate + H(+). ATP-dependent carboxylate-amine ligase which exhibits weak glutamate--cysteine ligase activity. The chain is Putative glutamate--cysteine ligase 2 from Bdellovibrio bacteriovorus (strain ATCC 15356 / DSM 50701 / NCIMB 9529 / HD100).